Consider the following 238-residue polypeptide: Probable xyloglucan-specific endo-beta-1,4-glucanase A (238 aa).

Residues 1–18 (MKLSLSVALSLAASTAQA) form the signal peptide. Residues N106 and N171 are each glycosylated (N-linked (GlcNAc...) asparagine).

It belongs to the glycosyl hydrolase 12 (cellulase H) family.

It is found in the secreted. It carries out the reaction xyloglucan + H2O = xyloglucan oligosaccharides.. Its function is as follows. Catalyzes endohydrolysis of 1,4-beta-D-glucosidic linkages in xyloglucan with retention of the beta-configuration of the glycosyl residues. Specific for xyloglucan and does not hydrolyze other cell wall components. The polypeptide is Probable xyloglucan-specific endo-beta-1,4-glucanase A (xgeA) (Aspergillus fumigatus (strain ATCC MYA-4609 / CBS 101355 / FGSC A1100 / Af293) (Neosartorya fumigata)).